A 29-amino-acid polypeptide reads, in one-letter code: ShK homolog Ask132958 (29 aa).

A ShKT domain is found at 1–29 (CENTISGCSRADCLLTHRKQGCQKTCGLC). Cystine bridges form between C1/C29, C8/C22, and C13/C26.

Belongs to the sea anemone type 1 potassium channel toxin family. Type 1a subfamily.

It is found in the secreted. Its subcellular location is the nematocyst. This peptide is similar to the potassium channel toxin ShK, but does not show activity on potassium channels. It appears that Lys-19, which is expected to occupy the pore of the channel, is not sufficiently accessible for binding, and therefore that this peptide must have a distinct functional role that does not involve potassium channels. It is noteworthy that this peptide is much more stable in the presence of trypsin, chymotrypsin and pepsin than the toxin ShK. In Anemonia sulcata (Mediterranean snakelocks sea anemone), this protein is ShK homolog Ask132958.